Consider the following 636-residue polypeptide: Carbon monoxide dehydrogenase 2 (636 aa).

The [4Fe-4S] cluster site is built by Cys-39, Cys-47, Cys-48, Cys-51, Cys-56, and Cys-70. Residues His-261, Cys-295, Cys-333, Cys-446, Cys-476, and Cys-526 each contribute to the [Ni-4Fe-5S] cluster site.

The protein belongs to the Ni-containing carbon monoxide dehydrogenase family. In terms of assembly, homodimer. Requires [4Fe-4S] cluster as cofactor. It depends on [Ni-4Fe-5S] cluster as a cofactor.

Its subcellular location is the cytoplasm. It is found in the cell membrane. The catalysed reaction is CO + 2 oxidized [2Fe-2S]-[ferredoxin] + H2O = 2 reduced [2Fe-2S]-[ferredoxin] + CO2 + 2 H(+). With respect to regulation, inactivated by O(2). Its function is as follows. CODH oxidizes carbon monoxide coupled, via CooF, to the reduction of a hydrogen cation by a hydrogenase (possibly CooH). The sequence is that of Carbon monoxide dehydrogenase 2 (cooS2) from Carboxydothermus hydrogenoformans (strain ATCC BAA-161 / DSM 6008 / Z-2901).